A 239-amino-acid polypeptide reads, in one-letter code: Endonuclease V (239 aa).

Mg(2+) contacts are provided by aspartate 50 and aspartate 118.

This sequence belongs to the endonuclease V family. Mg(2+) serves as cofactor.

It localises to the cytoplasm. It carries out the reaction Endonucleolytic cleavage at apurinic or apyrimidinic sites to products with a 5'-phosphate.. DNA repair enzyme involved in the repair of deaminated bases. Selectively cleaves double-stranded DNA at the second phosphodiester bond 3' to a deoxyinosine leaving behind the intact lesion on the nicked DNA. The polypeptide is Endonuclease V (Xylella fastidiosa (strain 9a5c)).